Reading from the N-terminus, the 365-residue chain is Protein-glutamate methylesterase/protein-glutamine glutaminase 2 (365 aa).

A Response regulatory domain is found at 6–123 (RVLIIDDSAS…ADSLSDDAMR (118 aa)). Aspartate 57 carries the 4-aspartylphosphate modification. Residues 173–359 (AKTTEMVVCV…PLDQIAREVL (187 aa)) form the CheB-type methylesterase domain. Active-site residues include serine 185, histidine 211, and aspartate 307.

The protein belongs to the CheB family. In terms of processing, phosphorylated by CheA. Phosphorylation of the N-terminal regulatory domain activates the methylesterase activity.

The protein localises to the cytoplasm. The catalysed reaction is [protein]-L-glutamate 5-O-methyl ester + H2O = L-glutamyl-[protein] + methanol + H(+). It catalyses the reaction L-glutaminyl-[protein] + H2O = L-glutamyl-[protein] + NH4(+). Its function is as follows. Involved in chemotaxis. Part of a chemotaxis signal transduction system that modulates chemotaxis in response to various stimuli. Catalyzes the demethylation of specific methylglutamate residues introduced into the chemoreceptors (methyl-accepting chemotaxis proteins or MCP) by CheR. Also mediates the irreversible deamidation of specific glutamine residues to glutamic acid. This Rhizobium johnstonii (strain DSM 114642 / LMG 32736 / 3841) (Rhizobium leguminosarum bv. viciae) protein is Protein-glutamate methylesterase/protein-glutamine glutaminase 2.